We begin with the raw amino-acid sequence, 682 residues long: Probable glycosyl transferase Gly (682 aa).

Residues C21–D26 and D112–C113 contribute to the UDP site. Positions 112, 114, and 230 each coordinate Mn(2+). UDP is bound at residue H230–K236.

This sequence belongs to the glycosyltransferase 8 family. As to quaternary structure, part of the accessory SecA2/SecY2 protein translocation apparatus required to export cell wall protein GspB.

Functionally, part of the accessory SecA2/SecY2 system specifically required to export GspB, a serine-rich repeat cell wall protein encoded upstream in the same operon. The polypeptide is Probable glycosyl transferase Gly (gly) (Streptococcus gordonii).